Here is a 132-residue protein sequence, read N- to C-terminus: Small ribosomal subunit protein uS8 (132 aa).

Belongs to the universal ribosomal protein uS8 family. As to quaternary structure, part of the 30S ribosomal subunit. Contacts proteins S5 and S12.

Functionally, one of the primary rRNA binding proteins, it binds directly to 16S rRNA central domain where it helps coordinate assembly of the platform of the 30S subunit. In Exiguobacterium sibiricum (strain DSM 17290 / CCUG 55495 / CIP 109462 / JCM 13490 / 255-15), this protein is Small ribosomal subunit protein uS8.